The chain runs to 289 residues: Bis(5'-nucleosyl)-tetraphosphatase, symmetrical (289 aa).

Belongs to the Ap4A hydrolase family.

It carries out the reaction P(1),P(4)-bis(5'-adenosyl) tetraphosphate + H2O = 2 ADP + 2 H(+). Functionally, hydrolyzes diadenosine 5',5'''-P1,P4-tetraphosphate to yield ADP. In Yersinia pseudotuberculosis serotype O:1b (strain IP 31758), this protein is Bis(5'-nucleosyl)-tetraphosphatase, symmetrical.